The primary structure comprises 456 residues: Argininosuccinate lyase (456 aa).

This sequence belongs to the lyase 1 family. Argininosuccinate lyase subfamily.

Its subcellular location is the cytoplasm. The catalysed reaction is 2-(N(omega)-L-arginino)succinate = fumarate + L-arginine. Its pathway is amino-acid biosynthesis; L-arginine biosynthesis; L-arginine from L-ornithine and carbamoyl phosphate: step 3/3. In Listeria monocytogenes serovar 1/2a (strain ATCC BAA-679 / EGD-e), this protein is Argininosuccinate lyase.